Here is a 56-residue protein sequence, read N- to C-terminus: Ovomucoid (56 aa).

The 51-residue stretch at 6–56 folds into the Kazal-like domain; sequence VDCSEYPKPACMSEYRPLCGSDNKTYVNKCNFCNAVVESNGTLTLSHFGKC. 3 disulfides stabilise this stretch: C8/C38, C16/C35, and C24/C56. N45 is a glycosylation site (N-linked (GlcNAc...) asparagine).

It is found in the secreted. This Colinus virginianus (Northern bobwhite) protein is Ovomucoid.